We begin with the raw amino-acid sequence, 130 residues long: Small ribosomal subunit protein uS8 (130 aa).

Belongs to the universal ribosomal protein uS8 family. In terms of assembly, part of the 30S ribosomal subunit.

Functionally, one of the primary rRNA binding proteins, it binds directly to 16S rRNA central domain where it helps coordinate assembly of the platform of the 30S subunit. This chain is Small ribosomal subunit protein uS8, found in Methanococcus aeolicus (strain ATCC BAA-1280 / DSM 17508 / OCM 812 / Nankai-3).